Reading from the N-terminus, the 376-residue chain is Alkanesulfonate monooxygenase (376 aa).

The protein belongs to the SsuD family.

It catalyses the reaction an alkanesulfonate + FMNH2 + O2 = an aldehyde + FMN + sulfite + H2O + 2 H(+). Its function is as follows. Catalyzes the desulfonation of aliphatic sulfonates. The polypeptide is Alkanesulfonate monooxygenase (Bacillus licheniformis (strain ATCC 14580 / DSM 13 / JCM 2505 / CCUG 7422 / NBRC 12200 / NCIMB 9375 / NCTC 10341 / NRRL NRS-1264 / Gibson 46)).